A 403-amino-acid chain; its full sequence is Tryptophan synthase beta chain (403 aa).

K96 carries the N6-(pyridoxal phosphate)lysine modification.

It belongs to the TrpB family. In terms of assembly, tetramer of two alpha and two beta chains. Requires pyridoxal 5'-phosphate as cofactor.

The enzyme catalyses (1S,2R)-1-C-(indol-3-yl)glycerol 3-phosphate + L-serine = D-glyceraldehyde 3-phosphate + L-tryptophan + H2O. It participates in amino-acid biosynthesis; L-tryptophan biosynthesis; L-tryptophan from chorismate: step 5/5. Functionally, the beta subunit is responsible for the synthesis of L-tryptophan from indole and L-serine. In Ralstonia nicotianae (strain ATCC BAA-1114 / GMI1000) (Ralstonia solanacearum), this protein is Tryptophan synthase beta chain.